The primary structure comprises 34 residues: Photosystem II reaction center protein M (34 aa).

A helical membrane pass occupies residues glycine 7–isoleucine 27.

The protein belongs to the PsbM family. As to quaternary structure, PSII is composed of 1 copy each of membrane proteins PsbA, PsbB, PsbC, PsbD, PsbE, PsbF, PsbH, PsbI, PsbJ, PsbK, PsbL, PsbM, PsbT, PsbX, PsbY, PsbZ, Psb30/Ycf12, peripheral proteins PsbO, CyanoQ (PsbQ), PsbU, PsbV and a large number of cofactors. It forms dimeric complexes.

The protein resides in the cellular thylakoid membrane. In terms of biological role, one of the components of the core complex of photosystem II (PSII). PSII is a light-driven water:plastoquinone oxidoreductase that uses light energy to abstract electrons from H(2)O, generating O(2) and a proton gradient subsequently used for ATP formation. It consists of a core antenna complex that captures photons, and an electron transfer chain that converts photonic excitation into a charge separation. This subunit is found at the monomer-monomer interface. This Synechococcus sp. (strain CC9902) protein is Photosystem II reaction center protein M.